The primary structure comprises 480 residues: uncharacterized protein (480 aa).

Lysine 222 carries the N6-(pyridoxal phosphate)lysine modification.

The protein belongs to the Orn/Lys/Arg decarboxylase class-I family. Pyridoxal 5'-phosphate is required as a cofactor.

This is an uncharacterized protein from Bacillus subtilis (strain 168).